Consider the following 329-residue polypeptide: Ferredoxin--NAD(P)(+) reductase CarAd (329 aa).

In terms of domain architecture, 2Fe-2S ferredoxin-type spans 2–92 (YQLKIEGQAP…DLRIKVAVQD (91 aa)). Cys-35, Cys-40, Cys-43, and Cys-76 together coordinate [2Fe-2S] cluster. The 101-residue stretch at 100–200 (ISRMEAEVVE…TGPMGTSFFR (101 aa)) folds into the FAD-binding FR-type domain.

As to quaternary structure, monomer. Carbazole 1,9a-dioxygenase complex consists of a terminal oxygenase component CarAa, a ferredoxin reductase component CarAd and a ferredoxin component CarAc. [2Fe-2S] cluster is required as a cofactor. FAD serves as cofactor.

It catalyses the reaction 2 reduced [2Fe-2S]-[ferredoxin] + NAD(+) + H(+) = 2 oxidized [2Fe-2S]-[ferredoxin] + NADH. It carries out the reaction 2 reduced [2Fe-2S]-[ferredoxin] + NADP(+) + H(+) = 2 oxidized [2Fe-2S]-[ferredoxin] + NADPH. In terms of biological role, part of the multicomponent carbazole 1,9a-dioxygenase (CARDO), that converts carbazole (CAR) into 2-aminobiphenyl-2,3-diol. It can use both NAD and NADP as electron donors, but NAD is supposed to be the physiological electron donor. The chain is Ferredoxin--NAD(P)(+) reductase CarAd (carAd) from Metapseudomonas resinovorans (Pseudomonas resinovorans).